Here is a 208-residue protein sequence, read N- to C-terminus: CASP-like protein 2U9 (208 aa).

At 1 to 27 (MGVADAPSPGNVPVLGDMKNRSAAEMK) the chain is on the cytoplasmic side. Residues 28 to 48 (ISVLALRALTLVLLVIALALM) form a helical membrane-spanning segment. The Extracellular segment spans residues 49-87 (VSNKQTQSIPIKLPGMASTIFLKKTATFSQITGVQYYVG). A helical transmembrane segment spans residues 88–108 (ALSVAVAYMFFQMLAGLFTIL). Over 109–120 (TTGSIVGSKSRA) the chain is Cytoplasmic. A helical membrane pass occupies residues 121–141 (WVTFILDQLIAYLMVSAATVV). The Extracellular segment spans residues 142 to 168 (AEVGYIARRGETKVGWNQVCSDFKHYC). The helical transmembrane segment at 169–189 (FIYGFSLVNAFLATIAFLPVV) threads the bilayer. Topologically, residues 190 to 208 (AVSAFHLFRMYGAQSAQSK) are cytoplasmic.

The protein belongs to the Casparian strip membrane proteins (CASP) family. Homodimer and heterodimers.

Its subcellular location is the cell membrane. This Selaginella moellendorffii (Spikemoss) protein is CASP-like protein 2U9.